Reading from the N-terminus, the 397-residue chain is ATP-dependent RNA helicase eIF4A (397 aa).

The Q motif motif lies at 23–51; that stretch reads YKFDDLNLKPNIVRGIFGYGYETPSAIQQ. One can recognise a Helicase ATP-binding domain in the interval 54-224; the sequence is ILPITEGRDV…TKFMNNPVRI (171 aa). 67–74 provides a ligand contact to ATP; the sequence is AQSGTGKT. The DEAD box signature appears at 172 to 175; it reads DEAD. The Helicase C-terminal domain occupies 235-396; sequence GIKQFYINVE…EMPADIGALF (162 aa).

Belongs to the DEAD box helicase family. eIF4A subfamily. In terms of assembly, component of the eIF4F complex, which composition varies with external and internal environmental conditions. It is composed of at least eIF4A, eIF4E and eIF4G.

It is found in the cytoplasm. It carries out the reaction ATP + H2O = ADP + phosphate + H(+). ATP-dependent RNA helicase which is a subunit of the eIF4F complex involved in cap recognition and is required for mRNA binding to ribosome. In the current model of translation initiation, eIF4A unwinds RNA secondary structures in the 5'-UTR of mRNAs which is necessary to allow efficient binding of the small ribosomal subunit, and subsequent scanning for the initiator codon. This chain is ATP-dependent RNA helicase eIF4A (TIF1), found in Scheffersomyces stipitis (strain ATCC 58785 / CBS 6054 / NBRC 10063 / NRRL Y-11545) (Yeast).